The chain runs to 438 residues: DEAD-box ATP-dependent RNA helicase 58, chloroplastic (438 aa).

The transit peptide at 1-44 (MAAFSGCASPLSTTLRSGLAPFTLRHRLRLRRLRASAATLREVC) directs the protein to the chloroplast. The Q motif motif lies at 41-69 (REVCAGRVPEHVLQRAEEVGYVVPTEVQE). One can recognise a Helicase ATP-binding domain in the interval 72–245 (LPVLLSGQDC…DCVQHKWTKT (174 aa)). 85 to 92 (AQTGSGKT) contributes to the ATP binding site. The DEAD box motif lies at 190 to 193 (DEVD). The region spanning 274 to 436 (RLHVLLSLLE…ELPVESMFAF (163 aa)) is the Helicase C-terminal domain.

It belongs to the DEAD box helicase family.

Its subcellular location is the plastid. The protein localises to the chloroplast. It carries out the reaction ATP + H2O = ADP + phosphate + H(+). The protein is DEAD-box ATP-dependent RNA helicase 58, chloroplastic of Oryza sativa subsp. japonica (Rice).